We begin with the raw amino-acid sequence, 162 residues long: D-beta-D-heptose 1-phosphate adenylyltransferase (162 aa).

The enzyme catalyses D-glycero-beta-D-manno-heptose 1-phosphate + ATP + H(+) = ADP-D-glycero-beta-D-manno-heptose + diphosphate. Its pathway is nucleotide-sugar biosynthesis; ADP-L-glycero-beta-D-manno-heptose biosynthesis; ADP-L-glycero-beta-D-manno-heptose from D-glycero-beta-D-manno-heptose 7-phosphate: step 3/4. The protein operates within bacterial outer membrane biogenesis; LPS core biosynthesis. Its function is as follows. Catalyzes the ADP transfer from ATP to D-glycero-beta-D-manno-heptose 1-phosphate, yielding ADP-D-glycero-beta-D-manno-heptose. Cannot use GTP, UTP, or CTP as substrate. Is not active against the alpha-anomer substrate. Is also able to catalyze the ADP transfer to beta-glucose 1-phosphate in vitro, yielding ADP-beta-glucose. The protein is D-beta-D-heptose 1-phosphate adenylyltransferase of Bordetella bronchiseptica (strain ATCC BAA-588 / NCTC 13252 / RB50) (Alcaligenes bronchisepticus).